Reading from the N-terminus, the 185-residue chain is Peptidyl-tRNA hydrolase (185 aa).

Residue Y14 participates in tRNA binding. H19 serves as the catalytic Proton acceptor. TRNA is bound by residues F64, N66, and N112.

It belongs to the PTH family. Monomer.

The protein resides in the cytoplasm. The enzyme catalyses an N-acyl-L-alpha-aminoacyl-tRNA + H2O = an N-acyl-L-amino acid + a tRNA + H(+). Its function is as follows. Hydrolyzes ribosome-free peptidyl-tRNAs (with 1 or more amino acids incorporated), which drop off the ribosome during protein synthesis, or as a result of ribosome stalling. Functionally, catalyzes the release of premature peptidyl moieties from peptidyl-tRNA molecules trapped in stalled 50S ribosomal subunits, and thus maintains levels of free tRNAs and 50S ribosomes. The chain is Peptidyl-tRNA hydrolase from Lactobacillus johnsonii (strain CNCM I-12250 / La1 / NCC 533).